The chain runs to 276 residues: ATP synthase subunit a (276 aa).

Transmembrane regions (helical) follow at residues 27–47 (ITML…LEVG), 61–81 (GQTF…SLAA), 120–140 (LPFI…GALL), 159–179 (DINT…YAGL), 225–245 (LVVA…LMAL), and 246–266 (GLFT…AYIH).

Belongs to the ATPase A chain family. F-type ATPases have 2 components, CF(1) - the catalytic core - and CF(0) - the membrane proton channel. CF(1) has five subunits: alpha(3), beta(3), gamma(1), delta(1), epsilon(1). CF(0) has four main subunits: a, b, b' and c.

Its subcellular location is the cellular thylakoid membrane. Functionally, key component of the proton channel; it plays a direct role in the translocation of protons across the membrane. The sequence is that of ATP synthase subunit a from Synechocystis sp. (strain ATCC 27184 / PCC 6803 / Kazusa).